The sequence spans 706 residues: MNSLFASTARGLEELLKSELEALGAHDCKIVQGGVHFQGDDRLMYQSLLWSRLASRILLPLNEFKVYSDLDLYLGVQAIDWPSIFGVDKTFAVHFSGVNDEIRNSQYGALKVKDAIVDSFTRKMDQRPTVAKQQPDIRVNVFLQRDMASVALDLSGEGLHQRGYRDLTGQAPLKENLAAAIIQRSGWQPGTPMVDPMCGSGTLLIEAAMMASDRAPGLHRGHWGFTAWNAFNEALWRELTTEAQVRARRGLLETSSRFFGSDIDRRVIEMARANARRAGVAELITFNANDISKLVNPLPEGPVGTVISNPPYGERLESEPALIALHNMFGRMMKTAFGGWRLSLFSASPELLSCLQLRADREFKAKNGPLDCVQKNYQLTANPLGAGGALVAEDYANRLRKNVKKLDKWAKQQGIECYRLYDADLPDYNVAVDRYGSKVVVQEYAPPKTIDPQKARQRLFDVINATLAVLELPSNQLVLKTRERQKGKNQYEKLAQKGEFLLVSEYNAKLWVNLTDYLDTGLFLDHRIARQMLGKMSQGKDFLNLFAYTGTASVHAGLGGARSTTTVDMSRTYLEWAEKNLRVNGLTGQQHRLIQADCLSWLSNTDEQFDVIFIDPPTFSNSKRMETTFDVQRDHLVLMKELKRLLRRKGTIMFSNNKRGFQMDLAGIAALGLEAKEITALTQSEDFARNRQIHNCWLVTHSQEEK.

Residues 43 to 154 (LMYQSLLWSR…RDMASVALDL (112 aa)) form the THUMP domain.

The protein belongs to the methyltransferase superfamily. RlmKL family.

It is found in the cytoplasm. The catalysed reaction is guanosine(2445) in 23S rRNA + S-adenosyl-L-methionine = N(2)-methylguanosine(2445) in 23S rRNA + S-adenosyl-L-homocysteine + H(+). It catalyses the reaction guanosine(2069) in 23S rRNA + S-adenosyl-L-methionine = N(2)-methylguanosine(2069) in 23S rRNA + S-adenosyl-L-homocysteine + H(+). Specifically methylates the guanine in position 2445 (m2G2445) and the guanine in position 2069 (m7G2069) of 23S rRNA. This Yersinia pestis bv. Antiqua (strain Antiqua) protein is Ribosomal RNA large subunit methyltransferase K/L.